A 455-amino-acid chain; its full sequence is Bifunctional protein GlmU (455 aa).

The pyrophosphorylase stretch occupies residues 1–226 (MALNVVILAA…AIEVEGANNR (226 aa)). UDP-N-acetyl-alpha-D-glucosamine contacts are provided by residues 8–11 (LAAG), Lys-22, Gln-73, 78–79 (GT), 100–102 (YGD), Gly-137, Glu-151, Asn-166, and Asn-224. Mg(2+) is bound at residue Asp-102. Asn-224 contacts Mg(2+). The linker stretch occupies residues 227–247 (VQLAQLERAYQARAAEKLMLE). An N-acetyltransferase region spans residues 248–455 (GANLRDPARL…WARPVKKPKS (208 aa)). UDP-N-acetyl-alpha-D-glucosamine-binding residues include Arg-330 and Lys-348. The active-site Proton acceptor is the His-360. 2 residues coordinate UDP-N-acetyl-alpha-D-glucosamine: Tyr-363 and Asn-374. Residues Ala-377, 383 to 384 (NY), Ser-402, Ala-420, and Arg-437 each bind acetyl-CoA.

The protein in the N-terminal section; belongs to the N-acetylglucosamine-1-phosphate uridyltransferase family. This sequence in the C-terminal section; belongs to the transferase hexapeptide repeat family. Homotrimer. Mg(2+) is required as a cofactor.

It localises to the cytoplasm. The catalysed reaction is alpha-D-glucosamine 1-phosphate + acetyl-CoA = N-acetyl-alpha-D-glucosamine 1-phosphate + CoA + H(+). It carries out the reaction N-acetyl-alpha-D-glucosamine 1-phosphate + UTP + H(+) = UDP-N-acetyl-alpha-D-glucosamine + diphosphate. It participates in nucleotide-sugar biosynthesis; UDP-N-acetyl-alpha-D-glucosamine biosynthesis; N-acetyl-alpha-D-glucosamine 1-phosphate from alpha-D-glucosamine 6-phosphate (route II): step 2/2. Its pathway is nucleotide-sugar biosynthesis; UDP-N-acetyl-alpha-D-glucosamine biosynthesis; UDP-N-acetyl-alpha-D-glucosamine from N-acetyl-alpha-D-glucosamine 1-phosphate: step 1/1. The protein operates within bacterial outer membrane biogenesis; LPS lipid A biosynthesis. In terms of biological role, catalyzes the last two sequential reactions in the de novo biosynthetic pathway for UDP-N-acetylglucosamine (UDP-GlcNAc). The C-terminal domain catalyzes the transfer of acetyl group from acetyl coenzyme A to glucosamine-1-phosphate (GlcN-1-P) to produce N-acetylglucosamine-1-phosphate (GlcNAc-1-P), which is converted into UDP-GlcNAc by the transfer of uridine 5-monophosphate (from uridine 5-triphosphate), a reaction catalyzed by the N-terminal domain. The chain is Bifunctional protein GlmU from Shewanella sediminis (strain HAW-EB3).